The primary structure comprises 309 residues: 4-hydroxy-3-methylbut-2-enyl diphosphate reductase (309 aa).

Cys12 contacts [4Fe-4S] cluster. Residues His41 and His74 each coordinate (2E)-4-hydroxy-3-methylbut-2-enyl diphosphate. 2 residues coordinate dimethylallyl diphosphate: His41 and His74. His41 and His74 together coordinate isopentenyl diphosphate. Cys96 contributes to the [4Fe-4S] cluster binding site. (2E)-4-hydroxy-3-methylbut-2-enyl diphosphate is bound at residue His124. His124 serves as a coordination point for dimethylallyl diphosphate. An isopentenyl diphosphate-binding site is contributed by His124. Glu126 acts as the Proton donor in catalysis. Position 167 (Thr167) interacts with (2E)-4-hydroxy-3-methylbut-2-enyl diphosphate. A [4Fe-4S] cluster-binding site is contributed by Cys197. (2E)-4-hydroxy-3-methylbut-2-enyl diphosphate contacts are provided by Ser225, Ser226, Asn227, and Ser269. Residues Ser225, Ser226, Asn227, and Ser269 each contribute to the dimethylallyl diphosphate site. 4 residues coordinate isopentenyl diphosphate: Ser225, Ser226, Asn227, and Ser269.

This sequence belongs to the IspH family. [4Fe-4S] cluster is required as a cofactor.

The catalysed reaction is isopentenyl diphosphate + 2 oxidized [2Fe-2S]-[ferredoxin] + H2O = (2E)-4-hydroxy-3-methylbut-2-enyl diphosphate + 2 reduced [2Fe-2S]-[ferredoxin] + 2 H(+). The enzyme catalyses dimethylallyl diphosphate + 2 oxidized [2Fe-2S]-[ferredoxin] + H2O = (2E)-4-hydroxy-3-methylbut-2-enyl diphosphate + 2 reduced [2Fe-2S]-[ferredoxin] + 2 H(+). Its pathway is isoprenoid biosynthesis; dimethylallyl diphosphate biosynthesis; dimethylallyl diphosphate from (2E)-4-hydroxy-3-methylbutenyl diphosphate: step 1/1. It functions in the pathway isoprenoid biosynthesis; isopentenyl diphosphate biosynthesis via DXP pathway; isopentenyl diphosphate from 1-deoxy-D-xylulose 5-phosphate: step 6/6. In terms of biological role, catalyzes the conversion of 1-hydroxy-2-methyl-2-(E)-butenyl 4-diphosphate (HMBPP) into a mixture of isopentenyl diphosphate (IPP) and dimethylallyl diphosphate (DMAPP). Acts in the terminal step of the DOXP/MEP pathway for isoprenoid precursor biosynthesis. The chain is 4-hydroxy-3-methylbut-2-enyl diphosphate reductase from Colwellia psychrerythraea (strain 34H / ATCC BAA-681) (Vibrio psychroerythus).